An 86-amino-acid polypeptide reads, in one-letter code: Arminin 7246 (86 aa).

Residues 1 to 18 form the signal peptide; sequence MRPEYAVLFLALIALTYA. A propeptide spanning residues 19–57 is cleaved from the precursor; that stretch reads RSNEDVREEIKNEIEKDILEDLVEDEGELDDKAIDVNDA. Alanine 83 is subject to Alanine amide.

It belongs to the arminin family. As to expression, expressed in entodermal epithelium along the body column.

Its subcellular location is the secreted. It is found in the target cell membrane. Antimicrobial peptide with a broad-spectrum antimicrobial activity. Keeps its antibacterial activity under a wide range of salt concentrations that mimic physiological conditions of human blood, which is surprising, since Hydra is an obligate freshwater animal with nearly no salt tolerance. Does not affect red blood cells. The polypeptide is Arminin 7246 (Hydra viridissima (Green hydra)).